The sequence spans 1714 residues: Bifunctional glutamate/proline--tRNA ligase (1714 aa).

The disordered stretch occupies residues 166-191 (DAKVKRSPQSSKEQTPAKTGERKQEG). A glutamate--tRNA ligase region spans residues 170-754 (KRSPQSSKEQ…ASELDSQISQ (585 aa)). Residues 172-182 (SPQSSKEQTPA) show a composition bias toward polar residues. The short motif at 209 to 220 (PPEASGYLHIGH) is the 'HIGH' region element. The short motif at 438-442 (VLSKR) is the 'KMSKS' region element. Disordered regions lie at residues 718-754 (PTSG…QISQ), 791-817 (GKDW…ANDA), and 943-962 (GTTA…EKNP). Low complexity-rich tracts occupy residues 734 to 746 (KASS…GQAS) and 800 to 817 (SASS…ANDA). WHEP-TRS domains follow at residues 744–800 (QASE…GQTS), 816–872 (DAVS…GTVP), 890–946 (SVAQ…GTTA), 969–1025 (TVNT…GTVA), and 1044–1100 (DVGS…DAKS). Residues 755–1201 (QGDLVRDLKS…KPAKPVKKEP (447 aa)) form a 6 X 57 AA approximate repeats region. 2 disordered regions span residues 1093–1119 (DWTP…SPAK) and 1168–1210 (FPVA…GAVK). Residues 1094-1109 (WTPDAKSEPAVVKKEA) are compositionally biased toward basic and acidic residues. Residue Ser1110 is modified to Phosphoserine. In terms of domain architecture, WHEP-TRS 6 spans 1118-1174 (AKDELTQEINAQGEKVRAAKGNKAAKEVIDAEVAKLLALKAKYKEVTGTDFPVAGRG). Positions 1172–1181 (GRGGGGGGGS) are enriched in gly residues. The segment at 1207–1714 (GAVKKQTRLG…KFYTLFGRSY (508 aa)) is proline--tRNA ligase. Residues 1322 to 1324 (TSE) and Arg1353 each bind L-proline. ATP is bound by residues Arg1353, Glu1355, Arg1364, Thr1365, Gln1438, and Thr1441. Gln1438 lines the Mg(2+) pocket. His1443 serves as a coordination point for L-proline. 2 residues coordinate ATP: Thr1476 and Arg1478. Zn(2+) contacts are provided by Cys1648, Cys1653, and Cys1695.

The protein in the N-terminal section; belongs to the class-I aminoacyl-tRNA synthetase family. Glutamate--tRNA ligase type 2 subfamily. It in the C-terminal section; belongs to the class-II aminoacyl-tRNA synthetase family. Component of the multisynthetase complex which is comprised of a bifunctional glutamyl-prolyl-tRNA synthetase, the monospecific isoleucyl, leucyl, glutaminyl, methionyl, lysyl, arginyl, and aspartyl-tRNA synthetases as well as three auxiliary proteins, p18, p48 and p43.

It carries out the reaction tRNA(Glu) + L-glutamate + ATP = L-glutamyl-tRNA(Glu) + AMP + diphosphate. The enzyme catalyses tRNA(Pro) + L-proline + ATP = L-prolyl-tRNA(Pro) + AMP + diphosphate. Functionally, catalyzes the attachment of both L-glutamate and L-proline to their cognate tRNAs in a two-step reaction where the amino acid is first activated by ATP to form a covalent intermediate with AMP. Subsequently, the activated amino acid is transferred to the acceptor end of the cognate tRNA to form L-glutamyl-tRNA(Glu) and L-prolyl-tRNA(Pro). In Drosophila melanogaster (Fruit fly), this protein is Bifunctional glutamate/proline--tRNA ligase.